The sequence spans 505 residues: ATP synthase subunit alpha (505 aa).

ATP is bound at residue 170–177 (GDRQTGKT).

Belongs to the ATPase alpha/beta chains family. F-type ATPases have 2 components, CF(1) - the catalytic core - and CF(0) - the membrane proton channel. CF(1) has five subunits: alpha(3), beta(3), gamma(1), delta(1), epsilon(1). CF(0) has four main subunits: a(1), b(1), b'(1) and c(9-12).

It localises to the cellular thylakoid membrane. The enzyme catalyses ATP + H2O + 4 H(+)(in) = ADP + phosphate + 5 H(+)(out). In terms of biological role, produces ATP from ADP in the presence of a proton gradient across the membrane. The alpha chain is a regulatory subunit. The chain is ATP synthase subunit alpha from Prochlorococcus marinus (strain MIT 9515).